The sequence spans 52 residues: Phospholamban (52 aa).

Met1 is modified (N-acetylmethionine). Over Met1 to Leu31 the chain is Cytoplasmic. The residue at position 16 (Ser16) is a Phosphoserine; by PKA. Thr17 carries the post-translational modification Phosphothreonine; by CaMK. A helical membrane pass occupies residues Phe32–Leu52.

The protein belongs to the phospholamban family. Homopentamer. Post-translationally, phosphorylated in response to beta-adrenergic stimulation. Phosphorylation by PKA abolishes the inhibition of ATP2A2-mediated calcium uptake. Heart.

The protein resides in the endoplasmic reticulum membrane. Its subcellular location is the sarcoplasmic reticulum membrane. The protein localises to the mitochondrion membrane. It is found in the membrane. Reversibly inhibits the activity of ATP2A2/SERCA2 in cardiac sarcoplasmic reticulum by decreasing the apparent affinity of the ATPase for Ca(2+). Binds preferentially to the ATP-bound E1 conformational form of ATP2A2 which predominates at low Ca(2+) concentrations during the diastolic phase of the cardiac cycle. Inhibits ATP2A2 Ca(2+) affinity by disrupting its allosteric activation by ATP. Modulates the contractility of the heart muscle in response to physiological stimuli via its effects on ATP2A2. Modulates calcium re-uptake during muscle relaxation and plays an important role in calcium homeostasis in the heart muscle. The degree of ATP2A2 inhibition depends on the oligomeric state of PLN. ATP2A2 inhibition is alleviated by PLN phosphorylation. This is Phospholamban (PLN) from Gallus gallus (Chicken).